The following is a 47-amino-acid chain: Large ribosomal subunit protein bL34 (47 aa).

It belongs to the bacterial ribosomal protein bL34 family.

The sequence is that of Large ribosomal subunit protein bL34 (rpmH) from Mycolicibacterium smegmatis (strain ATCC 700084 / mc(2)155) (Mycobacterium smegmatis).